Consider the following 88-residue polypeptide: Mitochondrial import inner membrane translocase subunit Tim10 (88 aa).

The Twin CX3C motif signature appears at 29–54 (CHRKCVPPHYKEAELSKGEAVCLDRC). Cystine bridges form between C29-C54 and C33-C50.

The protein belongs to the small Tim family. As to quaternary structure, heterohexamer; composed of 3 copies of TIMM9 and 3 copies of TIMM10/TIM10A, named soluble 70 kDa complex. The complex forms a 6-bladed alpha-propeller structure and associates with the TIMM22 component of the TIM22 complex. Interacts with multi-pass transmembrane proteins in transit.

Its subcellular location is the mitochondrion inner membrane. Mitochondrial intermembrane chaperone that participates in the import and insertion of multi-pass transmembrane proteins into the mitochondrial inner membrane. May also be required for the transfer of beta-barrel precursors from the TOM complex to the sorting and assembly machinery (SAM complex) of the outer membrane. Acts as a chaperone-like protein that protects the hydrophobic precursors from aggregation and guide them through the mitochondrial intermembrane space. The chain is Mitochondrial import inner membrane translocase subunit Tim10 (timm10) from Danio rerio (Zebrafish).